Here is a 236-residue protein sequence, read N- to C-terminus: MPVKKKRKSGVAAAAAEDGGLKKCKISSYCRSQPPARLISGEEHFSSKKCLAWFYEYAGPDEVVGPEGMEKFCEDIGVEPENIIMLVLAWKLEAESMGFFTKEEWLKGMTSLQCDCTEKLQNKFDFLRSQLNDISSFKNIYRYAFDFARDKDQRSLDIDTAKSMLALLLGRTWPLFSVFYQYLEQSKYRVMNKDQWYNVLEFSRTVHADLSNYDEDGAWPVLLDEFVEWHKVRQAS.

3 positions are modified to phosphoserine: serine 9, serine 40, and serine 47. In terms of domain architecture, DCUN1 spans 45–231 (FSSKKCLAWF…LLDEFVEWHK (187 aa)).

As to quaternary structure, part of a complex that contains DCUN1D5, CUL1 and RBX1; this interaction is bridged by CUL1. Interacts (via the DCUN1 domain) with the unneddylated cullins: interacts with CUL1, CUL2, CUL3, CUL4A, CUL4B and CUL5; these interactions promote the cullin neddylation and the identity of the cullin dictates the affinity of the interaction. Interacts (via DCUN1 domain) with UBE2M (N-terminally acetylated form) and probably with UBE2F (N-terminally acetylated form). May also interact with regulators or subunits of cullin-RING ligases such as RBX1, RNF7, ELOB and DDB1; these interactions are bridged by cullins. Interacts with CAND1; this interaction is bridged by cullins and strongly inhibits the neddylation of cullins. These CAND-cullin-DCNL complexes can only be neddylated in the presence of a substrate adapter. Post-translationally, phosphorylation at Ser-40 is independent of cullin's interaction. Phosphorylated in response to both TICAM1 and MYD88 dependent Toll-like receptor (TLR) pathway activation. Phosphorylated in response to IL1B stimulation.

It localises to the nucleus. The protein localises to the cytoplasm. The protein resides in the cytoskeleton. It is found in the spindle. Functionally, contributes to the neddylation of all cullins by transferring NEDD8 from N-terminally acetylated NEDD8-conjugating E2s enzyme to different cullin C-terminal domain-RBX complexes which is necessary for the activation of cullin-RING E3 ubiquitin ligases (CRLs). May play a role in DNA damage response and may participate in cell proliferation and anchorage-independent cell growth. The polypeptide is DCN1-like protein 5 (DCUN1D5) (Bos taurus (Bovine)).